Here is a 391-residue protein sequence, read N- to C-terminus: Phosphoglycerate kinase (391 aa).

Substrate is bound by residues 21–23 (DLN), arginine 36, 59–62 (HLGR), arginine 113, and arginine 146. Residues lysine 197, glutamate 319, and 345 to 348 (GGDT) each bind ATP.

This sequence belongs to the phosphoglycerate kinase family. In terms of assembly, monomer.

The protein resides in the cytoplasm. The enzyme catalyses (2R)-3-phosphoglycerate + ATP = (2R)-3-phospho-glyceroyl phosphate + ADP. The protein operates within carbohydrate degradation; glycolysis; pyruvate from D-glyceraldehyde 3-phosphate: step 2/5. The sequence is that of Phosphoglycerate kinase from Xanthomonas axonopodis pv. citri (strain 306).